Consider the following 458-residue polypeptide: ATP synthase subunit beta (458 aa).

Position 148-155 (148-155 (GGAGVGKT)) interacts with ATP.

The protein belongs to the ATPase alpha/beta chains family. As to quaternary structure, F-type ATPases have 2 components, CF(1) - the catalytic core - and CF(0) - the membrane proton channel. CF(1) has five subunits: alpha(3), beta(3), gamma(1), delta(1), epsilon(1). CF(0) has three main subunits: a(1), b(2) and c(9-12). The alpha and beta chains form an alternating ring which encloses part of the gamma chain. CF(1) is attached to CF(0) by a central stalk formed by the gamma and epsilon chains, while a peripheral stalk is formed by the delta and b chains.

The protein localises to the cell inner membrane. The enzyme catalyses ATP + H2O + 4 H(+)(in) = ADP + phosphate + 5 H(+)(out). Its function is as follows. Produces ATP from ADP in the presence of a proton gradient across the membrane. The catalytic sites are hosted primarily by the beta subunits. The chain is ATP synthase subunit beta from Pseudomonas fluorescens (strain ATCC BAA-477 / NRRL B-23932 / Pf-5).